The primary structure comprises 203 residues: Ras-related protein Rab-8B (203 aa).

Residues Gly-22–Ser-29, Asp-70–Gln-74, and Asn-128–Asp-131 each bind GTP. Residues Cys-202 and Cys-203 are each lipidated (S-geranylgeranyl cysteine).

This sequence belongs to the small GTPase superfamily. Rab family.

Its subcellular location is the cell membrane. In terms of biological role, protein transport. Probably involved in vesicular traffic. This chain is Ras-related protein Rab-8B (rab8B), found in Dictyostelium discoideum (Social amoeba).